The primary structure comprises 604 residues: Threonine--tRNA ligase (604 aa).

Residues 197–499 (DHRKLGRELG…LIEEYAGDFP (303 aa)) are catalytic. Zn(2+) contacts are provided by cysteine 296, histidine 347, and histidine 476.

It belongs to the class-II aminoacyl-tRNA synthetase family. As to quaternary structure, homodimer. The cofactor is Zn(2+).

Its subcellular location is the cytoplasm. It catalyses the reaction tRNA(Thr) + L-threonine + ATP = L-threonyl-tRNA(Thr) + AMP + diphosphate + H(+). Its function is as follows. Catalyzes the attachment of threonine to tRNA(Thr) in a two-step reaction: L-threonine is first activated by ATP to form Thr-AMP and then transferred to the acceptor end of tRNA(Thr). Also edits incorrectly charged L-seryl-tRNA(Thr). This chain is Threonine--tRNA ligase, found in Synechococcus elongatus (strain ATCC 33912 / PCC 7942 / FACHB-805) (Anacystis nidulans R2).